The primary structure comprises 324 residues: Meiotic recombination protein DLH1 (324 aa).

112 to 119 (GEFRCGKT) is a binding site for ATP. Arginine 214 serves as a coordination point for dsDNA. Residues arginine 214, tyrosine 217, arginine 220, arginine 226, and arginine 296 each contribute to the ssDNA site. The dsDNA site is built by arginine 220 and arginine 226.

It belongs to the RecA family. DMC1 subfamily. In terms of assembly, double stacked ring-shaped homooctamer.

The protein localises to the nucleus. In terms of biological role, required for meiotic recombination, synaptonemal complex formation and cell cycle progression. The chain is Meiotic recombination protein DLH1 (DLH1) from Candida albicans (Yeast).